The chain runs to 190 residues: Peptide methionine sulfoxide reductase MsrA (190 aa).

Cys-21 is an active-site residue.

Belongs to the MsrA Met sulfoxide reductase family.

It catalyses the reaction L-methionyl-[protein] + [thioredoxin]-disulfide + H2O = L-methionyl-(S)-S-oxide-[protein] + [thioredoxin]-dithiol. The enzyme catalyses [thioredoxin]-disulfide + L-methionine + H2O = L-methionine (S)-S-oxide + [thioredoxin]-dithiol. In terms of biological role, has an important function as a repair enzyme for proteins that have been inactivated by oxidation. Catalyzes the reversible oxidation-reduction of methionine sulfoxide in proteins to methionine. This Polynucleobacter asymbioticus (strain DSM 18221 / CIP 109841 / QLW-P1DMWA-1) (Polynucleobacter necessarius subsp. asymbioticus) protein is Peptide methionine sulfoxide reductase MsrA.